Consider the following 482-residue polypeptide: Glycogen synthase (482 aa).

Residue Lys15 participates in ADP-alpha-D-glucose binding.

The protein belongs to the glycosyltransferase 1 family. Bacterial/plant glycogen synthase subfamily.

The catalysed reaction is [(1-&gt;4)-alpha-D-glucosyl](n) + ADP-alpha-D-glucose = [(1-&gt;4)-alpha-D-glucosyl](n+1) + ADP + H(+). Its pathway is glycan biosynthesis; glycogen biosynthesis. In terms of biological role, synthesizes alpha-1,4-glucan chains using ADP-glucose. The polypeptide is Glycogen synthase (Hydrogenobaculum sp. (strain Y04AAS1)).